Consider the following 296-residue polypeptide: UBX domain-containing protein 1-A (296 aa).

One can recognise a UBA domain in the interval 1 to 42 (MAECSTLESLIEMGFSSTRAEKALTATGNQGIEPAMDWLVEH). The tract at residues 43-216 (EDDPDIDEPS…VQEPPTKKEY (174 aa)) is disordered. The span at 61-75 (TDTADTTDTTDTTDT) shows a compositional bias: low complexity. Composition is skewed to basic and acidic residues over residues 86-100 (PLTEEEKEKQTKRMM), 107-123 (QNEREEREKKERIEQEK), and 138-178 (KMQE…DRAR). Residues 87–177 (LTEEEKEKQT…KIARDKADRA (91 aa)) are a coiled coil. Residues 191 to 206 (PAETSIPATTPSPSSP) are compositionally biased toward low complexity. The 80-residue stretch at 214–293 (KEYDQCRIQV…GLVPTAVLIV (80 aa)) folds into the UBX domain.

The protein localises to the cytoplasm. In terms of biological role, component of a complex required to couple deglycosylation and proteasome-mediated degradation of misfolded proteins in the endoplasmic reticulum that are retrotranslocated in the cytosol. Involved in ubiquitin-proteasome systems. In Xenopus laevis (African clawed frog), this protein is UBX domain-containing protein 1-A (ubxn1-a).